Consider the following 57-residue polypeptide: Large ribosomal subunit protein bL32 (57 aa).

It belongs to the bacterial ribosomal protein bL32 family.

This chain is Large ribosomal subunit protein bL32, found in Geobacillus kaustophilus (strain HTA426).